The primary structure comprises 320 residues: Lactamase-like protein GME11357 (320 aa).

Zn(2+)-binding residues include His-106, His-108, Asp-110, and His-111. The active-site Proton donor/acceptor is the Asp-110.

The protein belongs to the metallo-beta-lactamase superfamily. Zn(2+) is required as a cofactor.

The protein operates within secondary metabolite biosynthesis. Lactamase-like protein; part of the gene cluster that mediates the biosynthesis of dibenzodioxocinones such as pestalotiollide B, a novel class of inhibitors against cholesterol ester transfer protein (CEPT). The biosynthesis initiates from condensation of acetate and malonate units catalyzed by the non-reducing PKS pks8/GME11356. Pks8/GME11356 lacks a thioesterase (TE) domain, which is important to the cyclizing of the third ring of atrochrysone carboxylic acid, and the esterase GME11355 might play the role of TE and catalyzes the cyclization reaction of the C ring. The lactamase-like protein GME11357 (or other beta-lactamases in Pestalotiopsis microspora) probably hydrolyzes the thioester bond between the ACP of pks8/GME11356 and the intermediate to release atrochrysone carboxylic acid, which is spontaneously dehydrates to form endocrocin anthrone. Endocrocin anthrone is further converted to emodin via the endocrocin intermediate. Emodin is then oxidized by several enzymes such as the Baeyer-Villiger oxidase GME11358, the oxidoreductase GME11367, the short chain dehydrogenase/reductase GME11373, as well as by other oxidoreductases from the cluster, to modify the A and C rings and open the B ring, and finally yield monodictyphenone. The prenyltransferase GME11375 may catalyze the addition reaction between the C5 side chains and the carbon bone of dibenzodioxocinones. The remaining biochemical reactions to the final product dibenzodioxocinones should be methylation catalyzed by methyltransferase GME11366 and reduction and lactonization reaction catalyzed by a series of oxidordeuctases. The polypeptide is Lactamase-like protein GME11357 (Pestalotiopsis microspora).